The chain runs to 221 residues: Putative 3-methyladenine DNA glycosylase (221 aa).

Belongs to the DNA glycosylase MPG family.

The sequence is that of Putative 3-methyladenine DNA glycosylase from Herpetosiphon aurantiacus (strain ATCC 23779 / DSM 785 / 114-95).